Here is a 236-residue protein sequence, read N- to C-terminus: Predicted GPI-anchored protein 43 (236 aa).

The first 24 residues, 1–24, serve as a signal peptide directing secretion; sequence MHQRNHHSILLTLLLYLQSIVALA. N-linked (GlcNAc...) asparagine glycans are attached at residues asparagine 192, asparagine 195, and asparagine 198. A lipid anchor (GPI-anchor amidated glycine) is attached at glycine 208. Positions 209-236 are cleaved as a propeptide — removed in mature form; the sequence is SVCLTSSYLNSPIIILCAILTGTLFAMY.

The protein resides in the cell membrane. The sequence is that of Predicted GPI-anchored protein 43 (PGA43) from Candida albicans (strain SC5314 / ATCC MYA-2876) (Yeast).